The sequence spans 345 residues: L-threonine 3-dehydrogenase (345 aa).

A Zn(2+)-binding site is contributed by C42. Active-site charge relay system residues include T44 and H47. Zn(2+)-binding residues include H67, E68, C97, C100, C103, and C111. NAD(+) is bound by residues I179, D199, R204, 266–268, and 290–291; these read LGI and IY.

It belongs to the zinc-containing alcohol dehydrogenase family. As to quaternary structure, homotetramer. The cofactor is Zn(2+).

It localises to the cytoplasm. It carries out the reaction L-threonine + NAD(+) = (2S)-2-amino-3-oxobutanoate + NADH + H(+). It functions in the pathway amino-acid degradation; L-threonine degradation via oxydo-reductase pathway; glycine from L-threonine: step 1/2. In terms of biological role, catalyzes the NAD(+)-dependent oxidation of L-threonine to 2-amino-3-ketobutyrate. This chain is L-threonine 3-dehydrogenase, found in Rhizobium johnstonii (strain DSM 114642 / LMG 32736 / 3841) (Rhizobium leguminosarum bv. viciae).